The following is a 487-amino-acid chain: Histamine H1 receptor (487 aa).

Residues 1–29 are Extracellular-facing; it reads MSLPNSSCLLEDKMCEGNKTTMASPQLMP. N-linked (GlcNAc...) asparagine glycans are attached at residues N5 and N18. A helical membrane pass occupies residues 30–50; the sequence is LVVVLSTICLVTVGLNLLVLY. Residues 51 to 64 lie on the Cytoplasmic side of the membrane; the sequence is AVRSERKLHTVGNL. The chain crosses the membrane as a helical span at residues 65-89; the sequence is YIVSLSVADLIVGAVVMPMNILYLL. Over 90–97 the chain is Extracellular; sequence MSKWSLGR. A helical transmembrane segment spans residues 98-123; sequence PLCLFWLSMDYVASTASIFSVFILCI. C100 and C180 are disulfide-bonded. D107 and T112 together coordinate histamine. An important for agonist binding region spans residues 107–112; that stretch reads DYVAST. Residues 124–144 are Cytoplasmic-facing; the sequence is DRYRSVQQPLRYLKYRTKTRA. Phosphothreonine is present on residues T140 and T142. A helical membrane pass occupies residues 145–164; sequence SATILGAWFLSFLWVIPILG. Over 165–188 the chain is Extracellular; it reads WNHFMQQTSVRREDKCETDFYDVT. A helical membrane pass occupies residues 189–211; the sequence is WFKVMTAIINFYLPTLLMLWFYA. N198 serves as a coordination point for histamine. The Cytoplasmic segment spans residues 212-416; it reads KIYKAVRQHC…MNRERKAAKQ (205 aa). Phosphoserine is present on S230. Positions 238 to 261 are enriched in basic and acidic residues; the sequence is KLRPENPKGDAKKPGKESPWEVLK. Positions 238-292 are disordered; sequence KLRPENPKGDAKKPGKESPWEVLKRKPKDAGGGSVLKSPSQTXKEMKSPVVFSQE. T279 carries the post-translational modification Phosphothreonine. S344 and S347 each carry phosphoserine. The segment at 345 to 379 is disordered; sequence EISEDQMLGDSQSFSRTDSDTTTETAPGKGKLRSG. The segment covering 353–369 has biased composition (polar residues); it reads GDSQSFSRTDSDTTTET. A phosphoserine mark is found at S380, S396, and S398. A helical transmembrane segment spans residues 417-440; sequence LGFIMAAFILCWIPYFIFFMVIAF. An important for agonist binding region spans residues 424-428; the sequence is FILCW. Y431 serves as a coordination point for histamine. An intrachain disulfide couples C441 to C444. Residues 441–446 are Extracellular-facing; it reads CKNCCN. The helical transmembrane segment at 447-469 threads the bilayer; sequence EHLHMFTIWLGYINSTLNPLIYP. Residues 470–487 lie on the Cytoplasmic side of the membrane; it reads LCNENFKKTFKRILHIRS.

Belongs to the G-protein coupled receptor 1 family. Phosphorylation at sites in the second and third cytoplasmic loops independently contribute to agonist-induced receptor down-regulation.

Its subcellular location is the cell membrane. G-protein-coupled receptor for histamine, a biogenic amine that functions as an immune modulator and a neurotransmitter. Through the H1 receptor, histamine mediates the contraction of smooth muscles and increases capillary permeability due to contraction of terminal venules. Also mediates neurotransmission in the central nervous system and thereby regulates circadian rhythms, emotional and locomotor activities as well as cognitive functions. The polypeptide is Histamine H1 receptor (Pan troglodytes (Chimpanzee)).